The sequence spans 197 residues: Protein Hikeshi (197 aa).

The tract at residues 18–55 (VAEDKFVFDLPDYENINHVVVFMLGTVPFPEGMGGSVY) is required for F-X-F-G repeats-nucleoporins recognition and nuclear import. A flexible linker region involved in nuclear import of HSP70 proteins region spans residues 124 to 134 (QTPVGNAAVSS).

This sequence belongs to the OPI10 family. Forms an asymmetric homodimer; required for binding and nuclear import of HSP70 proteins. Interacts with ATP-bound HSP70 proteins. Interacts with NUP62 and NUP153 (via F-X-F-G repeats). Interacts with HSPA8.

It is found in the cytoplasm. The protein localises to the cytosol. It localises to the nucleus. Its function is as follows. Acts as a specific nuclear import carrier for HSP70 proteins following heat-shock stress: acts by mediating the nucleoporin-dependent translocation of ATP-bound HSP70 proteins into the nucleus. HSP70 proteins import is required to protect cells from heat shock damages. Does not translocate ADP-bound HSP70 proteins into the nucleus. The protein is Protein Hikeshi of Bos taurus (Bovine).